A 237-amino-acid polypeptide reads, in one-letter code: Flagellar L-ring protein (237 aa).

The first 16 residues, 1-16 (MIKRSAVVLMAVILTG), serve as a signal peptide directing secretion. The N-palmitoyl cysteine moiety is linked to residue C17. C17 carries the S-diacylglycerol cysteine lipid modification. The interval 122-143 (PPDSSGDMSTDSNSSSDGKGSV) is disordered. Residues 124–140 (DSSGDMSTDSNSSSDGK) show a composition bias toward low complexity.

Belongs to the FlgH family. As to quaternary structure, the basal body constitutes a major portion of the flagellar organelle and consists of four rings (L,P,S, and M) mounted on a central rod.

The protein resides in the cell outer membrane. It localises to the bacterial flagellum basal body. Its function is as follows. Assembles around the rod to form the L-ring and probably protects the motor/basal body from shearing forces during rotation. This is Flagellar L-ring protein from Allorhizobium ampelinum (strain ATCC BAA-846 / DSM 112012 / S4) (Agrobacterium vitis (strain S4)).